The chain runs to 220 residues: Protein-L-isoaspartate O-methyltransferase (220 aa).

Residue Ser-68 is part of the active site.

This sequence belongs to the methyltransferase superfamily. L-isoaspartyl/D-aspartyl protein methyltransferase family.

Its subcellular location is the cytoplasm. It carries out the reaction [protein]-L-isoaspartate + S-adenosyl-L-methionine = [protein]-L-isoaspartate alpha-methyl ester + S-adenosyl-L-homocysteine. Functionally, catalyzes the methyl esterification of L-isoaspartyl residues in peptides and proteins that result from spontaneous decomposition of normal L-aspartyl and L-asparaginyl residues. It plays a role in the repair and/or degradation of damaged proteins. In Dictyoglomus turgidum (strain DSM 6724 / Z-1310), this protein is Protein-L-isoaspartate O-methyltransferase.